Reading from the N-terminus, the 983-residue chain is GPI ethanolamine phosphate transferase 2, catalytic subunit (983 aa).

The Lumenal portion of the chain corresponds to 1-431 (MRLGSGTFAT…SLSAQVAQYD (431 aa)). The N-linked (GlcNAc...) asparagine glycan is linked to Asn-194. 12 helical membrane-spanning segments follow: residues 432 to 452 (IYSM…LLLS), 471 to 491 (GFSL…VIVC), 506 to 526 (LAAG…VSVL), 552 to 572 (LLIL…SFVE), 699 to 719 (VLAA…CSPV), 721 to 741 (KAAL…IGSV), 752 to 772 (ISKG…ILFT), 789 to 809 (LKTV…ALLF), 812 to 832 (HNLP…KFIW), 879 to 899 (VEIP…VLWA), 919 to 939 (ACFC…VLVT), and 955 to 975 (LLYE…FTAM).

Belongs to the PIGG/PIGN/PIGO family. PIGG subfamily. As to quaternary structure, part of the ethanolamine phosphate transferase 2 complex composed by PIGG and PIGF. PIGF is required to stabilize it. Competes with PIGO for the binding of PIGF.

It is found in the endoplasmic reticulum membrane. It participates in glycolipid biosynthesis; glycosylphosphatidylinositol-anchor biosynthesis. Functionally, catalytic subunit of the ethanolamine phosphate transferase 2 complex that transfers an ethanolamine phosphate (EtNP) from a phosphatidylethanolamine (PE) to the 6-OH position of the second alpha-1,6-linked mannose of a 6-PEtn-alpha-D-Man-(1-&gt;2)-alpha-D-Man-(1-&gt;6)-2-PEtn-alpha-D-Man-(1-&gt;4)-alpha-D-GlcN-(1-&gt;6)-(1-radyl,2-acyl-sn-glycero-3-phospho)-2-acyl-inositol (also termed H7) intermediate to generate a 6-PEtn-alpha-D-Man-(1-&gt;2)-6-PEtn-alpha-D-Man-(1-&gt;6)-2-PEtn-alpha-D-Man-(1-&gt;4)-alpha-D-GlcN-(1-&gt;6)-(1-radyl,2-acyl-sn-glycero-3-phospho)-2-acyl-inositol (also termed H8) and participates in the eleventh step of the glycosylphosphatidylinositol-anchor biosynthesis. This is GPI ethanolamine phosphate transferase 2, catalytic subunit from Homo sapiens (Human).